The chain runs to 283 residues: Co-chaperone protein DjlA (283 aa).

Over 1-6 (MQIFGK) the chain is Periplasmic. Residues 7–30 (ILGGFFGFLFGGFFGAALGIFIGH) traverse the membrane as a helical segment. Over 31–283 (QFDKAKRMAN…DLIKKEKGIK (253 aa)) the chain is Cytoplasmic. Gly residues predominate over residues 188 to 197 (QGGGFSGHQS). A disordered region spans residues 188–210 (QGGGFSGHQSGGSHQQGQWQQAS). Positions 198–210 (GGSHQQGQWQQAS) are enriched in low complexity. The J domain maps to 217-283 (DAYNLLGISE…DLIKKEKGIK (67 aa)).

As to quaternary structure, homodimer.

The protein resides in the cell inner membrane. In terms of biological role, regulatory DnaK co-chaperone. Direct interaction between DnaK and DjlA is needed for the induction of the wcaABCDE operon, involved in the synthesis of a colanic acid polysaccharide capsule, possibly through activation of the RcsB/RcsC phosphotransfer signaling pathway. The colanic acid capsule may help the bacterium survive conditions outside the host. This Aliivibrio fischeri (strain ATCC 700601 / ES114) (Vibrio fischeri) protein is Co-chaperone protein DjlA.